A 285-amino-acid chain; its full sequence is Acetylglutamate kinase (285 aa).

Substrate is bound by residues 69–70, Arg91, and Asn183; that span reads GG.

This sequence belongs to the acetylglutamate kinase family. ArgB subfamily.

It localises to the cytoplasm. The catalysed reaction is N-acetyl-L-glutamate + ATP = N-acetyl-L-glutamyl 5-phosphate + ADP. It participates in amino-acid biosynthesis; L-arginine biosynthesis; N(2)-acetyl-L-ornithine from L-glutamate: step 2/4. Catalyzes the ATP-dependent phosphorylation of N-acetyl-L-glutamate. This chain is Acetylglutamate kinase, found in Jannaschia sp. (strain CCS1).